Reading from the N-terminus, the 367-residue chain is Cobalt-precorrin-5B C(1)-methyltransferase (367 aa).

The protein belongs to the CbiD family.

The enzyme catalyses Co-precorrin-5B + S-adenosyl-L-methionine = Co-precorrin-6A + S-adenosyl-L-homocysteine. It participates in cofactor biosynthesis; adenosylcobalamin biosynthesis; cob(II)yrinate a,c-diamide from sirohydrochlorin (anaerobic route): step 6/10. In terms of biological role, catalyzes the methylation of C-1 in cobalt-precorrin-5B to form cobalt-precorrin-6A. This chain is Cobalt-precorrin-5B C(1)-methyltransferase, found in Leptospira interrogans serogroup Icterohaemorrhagiae serovar copenhageni (strain Fiocruz L1-130).